An 81-amino-acid chain; its full sequence is ATP synthase subunit c (81 aa).

2 helical membrane-spanning segments follow: residues 5-25 (IAAG…IGAG) and 57-77 (VGLV…FVFA).

Belongs to the ATPase C chain family. F-type ATPases have 2 components, F(1) - the catalytic core - and F(0) - the membrane proton channel. F(1) has five subunits: alpha(3), beta(3), gamma(1), delta(1), epsilon(1). F(0) has three main subunits: a(1), b(2) and c(10-14). The alpha and beta chains form an alternating ring which encloses part of the gamma chain. F(1) is attached to F(0) by a central stalk formed by the gamma and epsilon chains, while a peripheral stalk is formed by the delta and b chains.

Its subcellular location is the cell membrane. F(1)F(0) ATP synthase produces ATP from ADP in the presence of a proton or sodium gradient. F-type ATPases consist of two structural domains, F(1) containing the extramembraneous catalytic core and F(0) containing the membrane proton channel, linked together by a central stalk and a peripheral stalk. During catalysis, ATP synthesis in the catalytic domain of F(1) is coupled via a rotary mechanism of the central stalk subunits to proton translocation. In terms of biological role, key component of the F(0) channel; it plays a direct role in translocation across the membrane. A homomeric c-ring of between 10-14 subunits forms the central stalk rotor element with the F(1) delta and epsilon subunits. This Mycolicibacterium gilvum (strain PYR-GCK) (Mycobacterium gilvum (strain PYR-GCK)) protein is ATP synthase subunit c.